The chain runs to 1088 residues: Sterol regulatory element-binding protein 2 (1088 aa).

The tract at residues 1-38 is transcriptional activation (acidic); the sequence is METLTELGDELTLGDIDEMLQFVSNQVGEFPDLFEEQL. Over 1 to 440 the chain is Cytoplasmic; that stretch reads METLTELGDE…TGLGMMDRSR (440 aa). Residues 59–70 are compositionally biased toward polar residues; sequence AAQQPYTTSAPQ. The interval 59 to 87 is disordered; that stretch reads AAQQPYTTSAPQPQLLPVKAPPQATPQRT. The bHLH domain occupies 290–340; the sequence is ERRTTHNIIEKRYRSSINDKIMELKDLVMGTDAKMHKSGVLKKAIDYIKYL. Residues 340-361 form a leucine-zipper region; that stretch reads LQQVNQKLRQENMALKLANQKN. Residues 392–431 form a disordered region; it reads SPPASDSGSPAVFSPYSVDSEPGSPLLDDEKVKDEPDSPT. A helical transmembrane segment spans residues 441–461; it reads MLLCTMTFLCLSFNPLTSLLH. At 462–494 the chain is on the lumenal side; that stretch reads PESGQYSERAVQHGTGRTMLGVEMSGFYGSWFD. A helical membrane pass occupies residues 495–515; sequence WLIPTIILWLVNGVIVLSVFM. Over 516–1088 the chain is Cytoplasmic; that stretch reads KLLIHGEPVT…LSGGTAMAAS (573 aa).

Belongs to the SREBP family. Forms a tight complex with scap, the SCAP-SREBP complex, in the endoplasmic reticulum membrane. As to quaternary structure, homodimer; efficient DNA binding of the soluble transcription factor fragment requires dimerization with another bHLH protein. In terms of processing, processed in the Golgi apparatus, releasing the protein from the membrane. At low cholesterol the SCAP-SREBP complex is recruited into COPII vesicles for export from the endoplasmic reticulum. In the Golgi, complex SREBPs are cleaved sequentially by site-1 (MBTPS1, S1P) and site-2 (MBTPS2, S2P) proteases. The first cleavage by site-1 protease occurs within the luminal loop, the second cleavage by site-2 protease occurs within the first transmembrane domain, releasing the transcription factor from the Golgi membrane.

The protein localises to the endoplasmic reticulum membrane. It is found in the golgi apparatus membrane. The protein resides in the cytoplasmic vesicle. Its subcellular location is the COPII-coated vesicle membrane. It localises to the nucleus. Precursor of the transcription factor form (Processed sterol regulatory element-binding protein 2), which is embedded in the endoplasmic reticulum membrane. Low sterol concentrations promote processing of this form, releasing the transcription factor form that translocates into the nucleus and activates transcription of genes involved in cholesterol biosynthesis. Its function is as follows. Key transcription factor that regulates expression of genes involved in cholesterol biosynthesis. Binds to the sterol regulatory element 1 (SRE-1) (5'-ATCACCCCAC-3'). Has dual sequence specificity binding to both an E-box motif (5'-ATCACGTGA-3') and to SRE-1 (5'-ATCACCCCAC-3'). Regulates transcription of genes related to cholesterol synthesis pathway. The chain is Sterol regulatory element-binding protein 2 from Xenopus laevis (African clawed frog).